A 751-amino-acid chain; its full sequence is Diamine oxidase [copper-containing] (751 aa).

The N-terminal stretch at 1–19 (MPALGWAVAAILMLQTAMA) is a signal peptide. N-linked (GlcNAc...) asparagine glycosylation is found at asparagine 110 and asparagine 168. Cysteine 177 and cysteine 181 are joined by a disulfide. Residue aspartate 373 is the Proton acceptor of the active site. A disulfide bridge links cysteine 391 with cysteine 417. The Schiff-base intermediate with substrate; via topaquinone role is filled by tyrosine 461. The residue at position 461 (tyrosine 461) is a 2',4',5'-topaquinone. Cu(2+) contacts are provided by histidine 510 and histidine 512. Residues aspartate 519, leucine 520, and aspartate 521 each coordinate Ca(2+). N-linked (GlcNAc...) asparagine glycosylation is present at asparagine 538. Ca(2+) is bound by residues glutamate 562, phenylalanine 653, asparagine 656, glutamate 658, aspartate 664, and leucine 665. Histidine 675 is a Cu(2+) binding site. Asparagine 745 carries N-linked (GlcNAc...) asparagine glycosylation.

It belongs to the copper/topaquinone oxidase family. As to quaternary structure, homodimer; disulfide-linked. The cofactor is Cu(2+). It depends on Ca(2+) as a cofactor. Requires L-topaquinone as cofactor. Post-translationally, N-glycosylated. In terms of processing, topaquinone (TPQ) is generated by copper-dependent autoxidation of a specific tyrosyl residue. Widely expressed with higher expression in placenta and kidney.

The protein localises to the secreted. The protein resides in the extracellular space. Its subcellular location is the cell membrane. The catalysed reaction is histamine + O2 + H2O = imidazole-4-acetaldehyde + H2O2 + NH4(+). It catalyses the reaction N(tau)-methylhistamine + O2 + H2O = 1-methylimidazole-4-acetaldehyde + H2O2 + NH4(+). The enzyme catalyses putrescine + O2 + H2O = 4-aminobutanal + H2O2 + NH4(+). It carries out the reaction cadaverine + O2 + H2O = 5-aminopentanal + H2O2 + NH4(+). Inhibited by amiloride and amiloride analogs. Inhibited by isoniazid, cimetidine, clonidine, berenil and pentamidine. Its function is as follows. Catalyzes the oxidative deamination of primary amines to the corresponding aldehydes with the concomitant production of hydrogen peroxide and ammonia. Its preferred substrates are the diamines histamine and 1-methylhistamine and it could therefore play a role in allergic and immune responses. Has a broad specificity for diamines and can also act on cadaverine and putrescine, two products of amino acid catabolism. It could also act on polyamines, like spermidine and spermine though less efficiently, and regulate various biological processes. The protein is Diamine oxidase [copper-containing] of Homo sapiens (Human).